We begin with the raw amino-acid sequence, 99 residues long: Large ribosomal subunit protein uL23 (99 aa).

Belongs to the universal ribosomal protein uL23 family. In terms of assembly, part of the 50S ribosomal subunit. Contacts protein L29, and trigger factor when it is bound to the ribosome.

Functionally, one of the early assembly proteins it binds 23S rRNA. One of the proteins that surrounds the polypeptide exit tunnel on the outside of the ribosome. Forms the main docking site for trigger factor binding to the ribosome. The sequence is that of Large ribosomal subunit protein uL23 from Psychromonas ingrahamii (strain DSM 17664 / CCUG 51855 / 37).